Here is a 286-residue protein sequence, read N- to C-terminus: 4-diphosphocytidyl-2-C-methyl-D-erythritol kinase (286 aa).

The active site involves Lys-11. 93–103 is a binding site for ATP; it reads PFGAGLGGGSS. The active site involves Asp-135.

This sequence belongs to the GHMP kinase family. IspE subfamily.

It catalyses the reaction 4-CDP-2-C-methyl-D-erythritol + ATP = 4-CDP-2-C-methyl-D-erythritol 2-phosphate + ADP + H(+). It participates in isoprenoid biosynthesis; isopentenyl diphosphate biosynthesis via DXP pathway; isopentenyl diphosphate from 1-deoxy-D-xylulose 5-phosphate: step 3/6. Its function is as follows. Catalyzes the phosphorylation of the position 2 hydroxy group of 4-diphosphocytidyl-2C-methyl-D-erythritol. The sequence is that of 4-diphosphocytidyl-2-C-methyl-D-erythritol kinase from Chlorobium phaeobacteroides (strain BS1).